The primary structure comprises 427 residues: Light-independent protochlorophyllide reductase subunit N (427 aa).

Positions 28, 53, and 114 each coordinate [4Fe-4S] cluster.

Belongs to the BchN/ChlN family. As to quaternary structure, protochlorophyllide reductase is composed of three subunits; BchL, BchN and BchB. Forms a heterotetramer of two BchB and two BchN subunits. [4Fe-4S] cluster is required as a cofactor.

The catalysed reaction is chlorophyllide a + oxidized 2[4Fe-4S]-[ferredoxin] + 2 ADP + 2 phosphate = protochlorophyllide a + reduced 2[4Fe-4S]-[ferredoxin] + 2 ATP + 2 H2O. It functions in the pathway porphyrin-containing compound metabolism; bacteriochlorophyll biosynthesis (light-independent). In terms of biological role, component of the dark-operative protochlorophyllide reductase (DPOR) that uses Mg-ATP and reduced ferredoxin to reduce ring D of protochlorophyllide (Pchlide) to form chlorophyllide a (Chlide). This reaction is light-independent. The NB-protein (BchN-BchB) is the catalytic component of the complex. The chain is Light-independent protochlorophyllide reductase subunit N from Jannaschia sp. (strain CCS1).